Here is a 608-residue protein sequence, read N- to C-terminus: Albumin 1 (608 aa).

The N-terminal stretch at Met-1–Ser-14 is a signal peptide. Residues Val-15–Arg-18 constitute a propeptide that is removed on maturation. Albumin domains follow at residues Ser-19 to His-205, Ala-206 to Asp-398, and Lys-402 to Ser-600. 18 disulfides stabilise this stretch: Cys-26/Cys-72, Cys-71/Cys-80, Cys-93/Cys-108, Cys-107/Cys-118, Cys-142/Cys-187, Cys-186/Cys-195, Cys-218/Cys-264, Cys-263/Cys-271, Cys-283/Cys-299, Cys-298/Cys-309, Cys-336/Cys-381, Cys-380/Cys-389, Cys-414/Cys-460, Cys-459/Cys-471, Cys-484/Cys-500, Cys-499/Cys-510, Cys-537/Cys-582, and Cys-581/Cys-590. N-linked (GlcNAc...) asparagine glycosylation is present at Asn-501.

It belongs to the ALB/AFP/VDB family. As to expression, plasma.

The protein resides in the secreted. Binds water, Ca(2+), Na(+), K(+), fatty acids, hormones, bilirubin and drugs. Its main function is the regulation of the colloidal osmotic pressure of blood. The chain is Albumin 1 (alb1) from Salmo salar (Atlantic salmon).